We begin with the raw amino-acid sequence, 794 residues long: DNA ligase (794 aa).

NAD(+) is bound by residues 35 to 39 (DAEYD), 84 to 85 (SL), and glutamate 126. Catalysis depends on lysine 128, which acts as the N6-AMP-lysine intermediate. Residues arginine 149, glutamate 186, lysine 302, and lysine 326 each contribute to the NAD(+) site. Positions 420, 423, 450, and 456 each coordinate Zn(2+). Residues 711-794 (VEGLPLAGQT…KLFDEHGVAR (84 aa)) form the BRCT domain.

This sequence belongs to the NAD-dependent DNA ligase family. LigA subfamily. Mg(2+) serves as cofactor. Requires Mn(2+) as cofactor.

It carries out the reaction NAD(+) + (deoxyribonucleotide)n-3'-hydroxyl + 5'-phospho-(deoxyribonucleotide)m = (deoxyribonucleotide)n+m + AMP + beta-nicotinamide D-nucleotide.. Functionally, DNA ligase that catalyzes the formation of phosphodiester linkages between 5'-phosphoryl and 3'-hydroxyl groups in double-stranded DNA using NAD as a coenzyme and as the energy source for the reaction. It is essential for DNA replication and repair of damaged DNA. In Pseudomonas aeruginosa (strain UCBPP-PA14), this protein is DNA ligase.